The following is a 430-amino-acid chain: Adenylosuccinate synthetase (430 aa).

Residues 12–18 (GDEGKGK) and 40–42 (GHT) contribute to the GTP site. Asp13 (proton acceptor) is an active-site residue. Mg(2+) contacts are provided by Asp13 and Gly40. Residues 13 to 16 (DEGK), 38 to 41 (NAGH), Thr130, Arg144, Gln224, Thr239, and Arg303 contribute to the IMP site. The active-site Proton donor is His41. Substrate is bound at residue 299 to 305 (TVTGRKR). Residues Arg305, 331–333 (KLD), and 413–415 (STS) contribute to the GTP site.

The protein belongs to the adenylosuccinate synthetase family. Homodimer. The cofactor is Mg(2+).

It localises to the cytoplasm. It carries out the reaction IMP + L-aspartate + GTP = N(6)-(1,2-dicarboxyethyl)-AMP + GDP + phosphate + 2 H(+). It functions in the pathway purine metabolism; AMP biosynthesis via de novo pathway; AMP from IMP: step 1/2. Plays an important role in the de novo pathway of purine nucleotide biosynthesis. Catalyzes the first committed step in the biosynthesis of AMP from IMP. The chain is Adenylosuccinate synthetase from Cereibacter sphaeroides (strain ATCC 17029 / ATH 2.4.9) (Rhodobacter sphaeroides).